A 164-amino-acid polypeptide reads, in one-letter code: ATP synthase subunit b (164 aa).

A helical transmembrane segment spans residues 10–32; sequence AVAFVLFFVLFGKKLWTPLAAAL.

The protein belongs to the ATPase B chain family. F-type ATPases have 2 components, F(1) - the catalytic core - and F(0) - the membrane proton channel. F(1) has five subunits: alpha(3), beta(3), gamma(1), delta(1), epsilon(1). F(0) has three main subunits: a(1), b(2) and c(10-14). The alpha and beta chains form an alternating ring which encloses part of the gamma chain. F(1) is attached to F(0) by a central stalk formed by the gamma and epsilon chains, while a peripheral stalk is formed by the delta and b chains.

It localises to the cell inner membrane. Its function is as follows. F(1)F(0) ATP synthase produces ATP from ADP in the presence of a proton or sodium gradient. F-type ATPases consist of two structural domains, F(1) containing the extramembraneous catalytic core and F(0) containing the membrane proton channel, linked together by a central stalk and a peripheral stalk. During catalysis, ATP synthesis in the catalytic domain of F(1) is coupled via a rotary mechanism of the central stalk subunits to proton translocation. Component of the F(0) channel, it forms part of the peripheral stalk, linking F(1) to F(0). The sequence is that of ATP synthase subunit b from Gluconacetobacter diazotrophicus (strain ATCC 49037 / DSM 5601 / CCUG 37298 / CIP 103539 / LMG 7603 / PAl5).